The chain runs to 533 residues: Probable RNA-binding protein 46 (533 aa).

3 RRM domains span residues 61 to 139, 141 to 223, and 236 to 308; these read CEVF…VSLD, CRLF…WADP, and KVLY…LAKP. The segment at 338 to 362 is disordered; sequence ESHSKSLGKPPTLPTRLNGQHSPSP.

In terms of assembly, interacts with YTHDC2, MEIOC, MOV10, CNOT6L, DDX4, UPF1 and PABPC1. As to expression, expressed in the testis and ovary (at protein level). Expressed in spermatogonia and spermatocytes in testis (at protein level).

Its subcellular location is the cytoplasm. Functionally, essential for male and female fertility, playing a crucial role in regulating germ cell development by ensuring the proper progression of meiosis prophase I. Regulates mitotic-to-meiotic transition in spermatogenesis by forming a complex with MEIOC and YTHDC2 which recognizes and down-regulates mitotic transcripts for a successful meiotic entry. Required for normal synaptonemal complex formation during meiosis, binding meiotic cohesin subunit mRNAs containing GCCUAU/GUUCGA motifs in their 3'UTRs regions and positively regulating their translation. Required for spermatogonial differentiation in both developing and adult testis. In Mus musculus (Mouse), this protein is Probable RNA-binding protein 46.